The chain runs to 423 residues: Type II methyltransferase M.NgoBV (423 aa).

One can recognise an SAM-dependent MTase C5-type domain in the interval 4-423; the sequence is IKFIDLFSGM…AVSERLLHTL (420 aa). C80 is a catalytic residue.

Belongs to the class I-like SAM-binding methyltransferase superfamily. C5-methyltransferase family.

The catalysed reaction is a 2'-deoxycytidine in DNA + S-adenosyl-L-methionine = a 5-methyl-2'-deoxycytidine in DNA + S-adenosyl-L-homocysteine + H(+). Functionally, a methylase, recognizes the double-stranded sequence 5'-GGNNCC-3', methylates C-5 on both strands, and protects the DNA from cleavage by the NgoBV endonuclease. The protein is Type II methyltransferase M.NgoBV (ngoBVM) of Neisseria gonorrhoeae.